We begin with the raw amino-acid sequence, 286 residues long: ATP synthase gamma chain (286 aa).

It belongs to the ATPase gamma chain family. F-type ATPases have 2 components, CF(1) - the catalytic core - and CF(0) - the membrane proton channel. CF(1) has five subunits: alpha(3), beta(3), gamma(1), delta(1), epsilon(1). CF(0) has three main subunits: a, b and c.

The protein resides in the cell inner membrane. Its function is as follows. Produces ATP from ADP in the presence of a proton gradient across the membrane. The gamma chain is believed to be important in regulating ATPase activity and the flow of protons through the CF(0) complex. The chain is ATP synthase gamma chain from Pseudomonas putida (strain ATCC 700007 / DSM 6899 / JCM 31910 / BCRC 17059 / LMG 24140 / F1).